The sequence spans 202 residues: Mevalonate-3-phosphate 5-kinase (202 aa).

It carries out the reaction (R)-3-phosphomevalonate + ATP = (R)-3,5-bisphosphomevalonate + ADP + H(+). It functions in the pathway isoprenoid biosynthesis; isopentenyl diphosphate biosynthesis via mevalonate pathway. Its function is as follows. Phosphorylates mevalonate 3-phosphate to form mevalonate 3,5-bisphosphate. Functions in an alternative mevalonate pathway, only present in extreme acidophiles of the Thermoplasmatales order, which passes through mevalonate 3-phosphate rather than mevalonate 5-phosphate. The chain is Mevalonate-3-phosphate 5-kinase from Thermoplasma acidophilum (strain ATCC 25905 / DSM 1728 / JCM 9062 / NBRC 15155 / AMRC-C165).